The following is a 189-amino-acid chain: MALPHAILVSLCEQASSGYELARRFDRSIGYFWTATHQQIYRTLRVMENNNWVRATTVLQHGRPDKKVYAISDSGRAELARWIAEPLSPTRPGRGSALTDSSTRDIAVKLRGAGYGDVAALYTQVTALRAERVKSLDTYRGIEKRTFADPSALDGAALHQYLVLRGGIRAEESAIDWLDEVAEALQEKR.

Belongs to the PadR family. Homodimer.

It localises to the cytoplasm. In terms of biological role, probable transcriptional regulator that may help mitigate the effect of oxidative stress and help mycobacteria survive inside macrophages. Binds to its own promoter region. The sequence is that of Probable transcriptional regulator Rv1176c from Mycobacterium tuberculosis (strain ATCC 25618 / H37Rv).